Reading from the N-terminus, the 218-residue chain is Peptide methionine sulfoxide reductase MsrA (218 aa).

Cys-57 is a catalytic residue.

This sequence belongs to the MsrA Met sulfoxide reductase family.

The catalysed reaction is L-methionyl-[protein] + [thioredoxin]-disulfide + H2O = L-methionyl-(S)-S-oxide-[protein] + [thioredoxin]-dithiol. It catalyses the reaction [thioredoxin]-disulfide + L-methionine + H2O = L-methionine (S)-S-oxide + [thioredoxin]-dithiol. In terms of biological role, has an important function as a repair enzyme for proteins that have been inactivated by oxidation. Catalyzes the reversible oxidation-reduction of methionine sulfoxide in proteins to methionine. This is Peptide methionine sulfoxide reductase MsrA from Brucella abortus (strain S19).